The sequence spans 160 residues: Dr hemagglutinin structural subunit (160 aa).

Positions 1–21 (MKKLAIMAAASMVFAVSSAHA) are cleaved as a signal peptide. Positions 22 to 75 (GFTPSGTTGTTKLTVTEECQVRVGDLTVAKTRGQLTDAAPIGPVTVQALGCDAR) are receptor-binding.

This sequence belongs to the Dr-adhesin family.

The protein localises to the fimbrium. Functionally, hemagglutinins of uropathogenic E.coli mediate adherence to the upper urinary tract. These adhesins bind to the Dr blood group antigen and also agglutinate human erythrocytes in the presence of D-mannose (mannose-resistant hemagglutination (MRHA)). This is Dr hemagglutinin structural subunit (draA) from Escherichia coli.